A 429-amino-acid polypeptide reads, in one-letter code: D-inositol 3-phosphate glycosyltransferase (429 aa).

Residue histidine 20 coordinates 1D-myo-inositol 3-phosphate. UDP-N-acetyl-alpha-D-glucosamine is bound by residues 26–27 (QP) and glycine 34. Residues 31-36 (DAGGMN), lysine 89, tyrosine 122, threonine 146, and arginine 166 contribute to the 1D-myo-inositol 3-phosphate site. Arginine 240, lysine 245, and glutamine 306 together coordinate UDP-N-acetyl-alpha-D-glucosamine. Positions 315, 316, and 318 each coordinate Mg(2+). Residues glutamate 328 and glutamate 336 each coordinate UDP-N-acetyl-alpha-D-glucosamine. Threonine 342 is a Mg(2+) binding site.

This sequence belongs to the glycosyltransferase group 1 family. MshA subfamily. As to quaternary structure, homodimer.

The catalysed reaction is 1D-myo-inositol 3-phosphate + UDP-N-acetyl-alpha-D-glucosamine = 1D-myo-inositol 2-acetamido-2-deoxy-alpha-D-glucopyranoside 3-phosphate + UDP + H(+). Its function is as follows. Catalyzes the transfer of a N-acetyl-glucosamine moiety to 1D-myo-inositol 3-phosphate to produce 1D-myo-inositol 2-acetamido-2-deoxy-glucopyranoside 3-phosphate in the mycothiol biosynthesis pathway. The sequence is that of D-inositol 3-phosphate glycosyltransferase from Nocardiopsis dassonvillei (strain ATCC 23218 / DSM 43111 / CIP 107115 / JCM 7437 / KCTC 9190 / NBRC 14626 / NCTC 10488 / NRRL B-5397 / IMRU 509) (Actinomadura dassonvillei).